The primary structure comprises 441 residues: Signal recognition particle 54 kDa protein (441 aa).

GTP is bound by residues 104-111 (GLQGSGKT), 186-190 (DTAGR), and 244-247 (TKLD).

The protein belongs to the GTP-binding SRP family. SRP54 subfamily. Part of the signal recognition particle protein translocation system, which is composed of SRP and FtsY. Archaeal SRP consists of a 7S RNA molecule of 300 nucleotides and two protein subunits: SRP54 and SRP19.

Its subcellular location is the cytoplasm. The catalysed reaction is GTP + H2O = GDP + phosphate + H(+). Involved in targeting and insertion of nascent membrane proteins into the cytoplasmic membrane. Binds to the hydrophobic signal sequence of the ribosome-nascent chain (RNC) as it emerges from the ribosomes. The SRP-RNC complex is then targeted to the cytoplasmic membrane where it interacts with the SRP receptor FtsY. This chain is Signal recognition particle 54 kDa protein, found in Staphylothermus marinus (strain ATCC 43588 / DSM 3639 / JCM 9404 / F1).